A 109-amino-acid chain; its full sequence is Large ribosomal subunit protein eL30A (109 aa).

Belongs to the eukaryotic ribosomal protein eL30 family. Component of the large ribosomal subunit (LSU). Mature yeast ribosomes consist of a small (40S) and a large (60S) subunit. The 40S small subunit contains 1 molecule of ribosomal RNA (18S rRNA) and at least 33 different proteins. The large 60S subunit contains 3 rRNA molecules (25S, 5.8S and 5S rRNA) and at least 46 different proteins.

The protein resides in the cytoplasm. Functionally, component of the ribosome, a large ribonucleoprotein complex responsible for the synthesis of proteins in the cell. The small ribosomal subunit (SSU) binds messenger RNAs (mRNAs) and translates the encoded message by selecting cognate aminoacyl-transfer RNA (tRNA) molecules. The large subunit (LSU) contains the ribosomal catalytic site termed the peptidyl transferase center (PTC), which catalyzes the formation of peptide bonds, thereby polymerizing the amino acids delivered by tRNAs into a polypeptide chain. The nascent polypeptides leave the ribosome through a tunnel in the LSU and interact with protein factors that function in enzymatic processing, targeting, and the membrane insertion of nascent chains at the exit of the ribosomal tunnel. This chain is Large ribosomal subunit protein eL30A (rpl3001), found in Schizosaccharomyces pombe (strain 972 / ATCC 24843) (Fission yeast).